We begin with the raw amino-acid sequence, 205 residues long: NADH-quinone oxidoreductase subunit I (205 aa).

4Fe-4S ferredoxin-type domains are found at residues 75-104 (RLLE…METS) and 114-143 (HEYT…HGGR). Residues cysteine 84, cysteine 87, cysteine 90, cysteine 94, cysteine 123, cysteine 126, cysteine 129, and cysteine 133 each contribute to the [4Fe-4S] cluster site.

This sequence belongs to the complex I 23 kDa subunit family. NDH-1 is composed of 14 different subunits. Subunits NuoA, H, J, K, L, M, N constitute the membrane sector of the complex. [4Fe-4S] cluster serves as cofactor.

It is found in the cell inner membrane. It carries out the reaction a quinone + NADH + 5 H(+)(in) = a quinol + NAD(+) + 4 H(+)(out). Functionally, NDH-1 shuttles electrons from NADH, via FMN and iron-sulfur (Fe-S) centers, to quinones in the respiratory chain. The immediate electron acceptor for the enzyme in this species is believed to be ubiquinone. Couples the redox reaction to proton translocation (for every two electrons transferred, four hydrogen ions are translocated across the cytoplasmic membrane), and thus conserves the redox energy in a proton gradient. The sequence is that of NADH-quinone oxidoreductase subunit I from Wolinella succinogenes (strain ATCC 29543 / DSM 1740 / CCUG 13145 / JCM 31913 / LMG 7466 / NCTC 11488 / FDC 602W) (Vibrio succinogenes).